A 96-amino-acid chain; its full sequence is Large ribosomal subunit protein bL21 (96 aa).

The segment covering 73–84 (KRRKRYQSRNGH) has biased composition (basic residues). Positions 73 to 96 (KRRKRYQSRNGHRQQMTQIEVVSL) are disordered. The span at 85–96 (RQQMTQIEVVSL) shows a compositional bias: polar residues.

The protein belongs to the bacterial ribosomal protein bL21 family. As to quaternary structure, part of the 50S ribosomal subunit. Contacts protein L20.

In terms of biological role, this protein binds to 23S rRNA in the presence of protein L20. This chain is Large ribosomal subunit protein bL21, found in Chlorobium luteolum (strain DSM 273 / BCRC 81028 / 2530) (Pelodictyon luteolum).